Here is a 621-residue protein sequence, read N- to C-terminus: MANVPWAEVCEKFQAALALSRVELHKNPEKEPYKSKYSARALLEEVKALLGPAPEDEDERPEAEDGPGAGDHALGLPAEVVEPEGPVAQRAVRLAVIEFHLGVNHIDTEELSAGEEHLVKCLRLLRRYRLSHDCISLCIQAQNNLGILWSEREEIETAQAYLESSEALYNQYMKEVGSPPLDPTERFLPEEEKLTEQERSKRFEKVYTHNLYYLAQVYQHLEMFEKAAHYCHSTLKRQLEHNAYHPIEWAINAATLSQFYINKLCFMEARHCLSAANVIFGQTGKISATEDTPEAEGEVPELYHQRKGEIARCWIKYCLTLMQNAQLSMQDNIGELDLDKQSELRALRKKELDEEESIRKKAVQFGTGELCDAISAVEEKVSYLRPLDFEEARELFLLGQHYVFEAKEFFQIDGYVTDHIEVVQDHSALFKVLAFFETDMERRCKMHKRRIAMLEPLTVDLNPQYYLLVNRQIQFEIAHAYYDMMDLKVAIADRLRDPDSHIVKKINNLNKSALKYYQLFLDSLRDPNKVFPEHIGEDVLRPAMLAKFRVARLYGKIITADPKKELENLATSLEHYKFIVDYCEKHPEAAQEIEVELELSKEMVSLLPTKMERFRTKMALT.

The segment at 51–75 (GPAPEDEDERPEAEDGPGAGDHALG) is disordered. Positions 54-65 (PEDEDERPEAED) are enriched in acidic residues. A Phosphoserine modification is found at Ser-178.

This sequence belongs to the KIF-binding protein family. In terms of assembly, interacts with KIF1B; positively regulates KIF1B microtubule motor activity. Interacts with STMN2. As to expression, highly expressed in heart, brain, ovary, testis, spinal cord and all specific brain regions examined. Moderate expressed at intermediate level in all other adult tissues examined, as well as in fetal liver and brain. Not expressed in blood leukocytes.

It localises to the cytoplasm. It is found in the cytoskeleton. Functionally, activator of KIF1B plus-end-directed microtubule motor activity. Required for organization of axonal microtubules, and axonal outgrowth and maintenance during peripheral and central nervous system development. In Homo sapiens (Human), this protein is KIF-binding protein.